A 100-amino-acid polypeptide reads, in one-letter code: Urease subunit gamma (100 aa).

It belongs to the urease gamma subunit family. Heterotrimer of UreA (gamma), UreB (beta) and UreC (alpha) subunits. Three heterotrimers associate to form the active enzyme.

The protein localises to the cytoplasm. The catalysed reaction is urea + 2 H2O + H(+) = hydrogencarbonate + 2 NH4(+). Its pathway is nitrogen metabolism; urea degradation; CO(2) and NH(3) from urea (urease route): step 1/1. The polypeptide is Urease subunit gamma (Halalkalibacterium halodurans (strain ATCC BAA-125 / DSM 18197 / FERM 7344 / JCM 9153 / C-125) (Bacillus halodurans)).